Reading from the N-terminus, the 337-residue chain is Phenylalanine--tRNA ligase alpha subunit (337 aa).

Residue E252 participates in Mg(2+) binding.

Belongs to the class-II aminoacyl-tRNA synthetase family. Phe-tRNA synthetase alpha subunit type 1 subfamily. Tetramer of two alpha and two beta subunits. Requires Mg(2+) as cofactor.

The protein localises to the cytoplasm. The catalysed reaction is tRNA(Phe) + L-phenylalanine + ATP = L-phenylalanyl-tRNA(Phe) + AMP + diphosphate + H(+). This is Phenylalanine--tRNA ligase alpha subunit from Francisella tularensis subsp. novicida (strain U112).